We begin with the raw amino-acid sequence, 119 residues long: Large ribosomal subunit protein uL18 (119 aa).

It belongs to the universal ribosomal protein uL18 family. As to quaternary structure, part of the 50S ribosomal subunit; part of the 5S rRNA/L5/L18/L25 subcomplex. Contacts the 5S and 23S rRNAs.

In terms of biological role, this is one of the proteins that bind and probably mediate the attachment of the 5S RNA into the large ribosomal subunit, where it forms part of the central protuberance. The sequence is that of Large ribosomal subunit protein uL18 from Borrelia duttonii (strain Ly).